Consider the following 111-residue polypeptide: Ribonuclease P protein component (111 aa).

Belongs to the RnpA family. Consists of a catalytic RNA component (M1 or rnpB) and a protein subunit.

The enzyme catalyses Endonucleolytic cleavage of RNA, removing 5'-extranucleotides from tRNA precursor.. In terms of biological role, RNaseP catalyzes the removal of the 5'-leader sequence from pre-tRNA to produce the mature 5'-terminus. It can also cleave other RNA substrates such as 4.5S RNA. The protein component plays an auxiliary but essential role in vivo by binding to the 5'-leader sequence and broadening the substrate specificity of the ribozyme. In Mycoplasmopsis pulmonis (strain UAB CTIP) (Mycoplasma pulmonis), this protein is Ribonuclease P protein component.